Here is a 723-residue protein sequence, read N- to C-terminus: Polyribonucleotide nucleotidyltransferase (723 aa).

Mg(2+) is bound by residues Asp-488 and Asp-494. In terms of domain architecture, KH spans 555 to 614 (PKIITLNIKPEKIKDVIGPGGKQINAIIDETGVKIDIEQDGTVYIASQDQAMNRKAIAII). Residues 624 to 692 (GEVYTGKVRR…QQGRVNLSRK (69 aa)) form the S1 motif domain. Positions 692–723 (KALLEKKEQPEGDKKPQAEKKFYPKTKKPESK) are disordered. A compositionally biased stretch (basic and acidic residues) spans 693 to 723 (ALLEKKEQPEGDKKPQAEKKFYPKTKKPESK).

This sequence belongs to the polyribonucleotide nucleotidyltransferase family. Mg(2+) is required as a cofactor.

Its subcellular location is the cytoplasm. It carries out the reaction RNA(n+1) + phosphate = RNA(n) + a ribonucleoside 5'-diphosphate. Involved in mRNA degradation. Catalyzes the phosphorolysis of single-stranded polyribonucleotides processively in the 3'- to 5'-direction. This Listeria monocytogenes serovar 1/2a (strain ATCC BAA-679 / EGD-e) protein is Polyribonucleotide nucleotidyltransferase.